A 195-amino-acid chain; its full sequence is Nucleoside triphosphate pyrophosphatase (195 aa).

Catalysis depends on Asp70, which acts as the Proton acceptor.

Belongs to the Maf family. A divalent metal cation is required as a cofactor.

The protein localises to the cytoplasm. It carries out the reaction a ribonucleoside 5'-triphosphate + H2O = a ribonucleoside 5'-phosphate + diphosphate + H(+). The catalysed reaction is a 2'-deoxyribonucleoside 5'-triphosphate + H2O = a 2'-deoxyribonucleoside 5'-phosphate + diphosphate + H(+). Nucleoside triphosphate pyrophosphatase. May have a dual role in cell division arrest and in preventing the incorporation of modified nucleotides into cellular nucleic acids. The chain is Nucleoside triphosphate pyrophosphatase from Cyanothece sp. (strain PCC 7425 / ATCC 29141).